We begin with the raw amino-acid sequence, 359 residues long: Protein FLX-like 2 (359 aa).

Residues 1–16 (MESKGRIHPSHHHMRR) show a composition bias toward basic residues. A disordered region spans residues 1 to 27 (MESKGRIHPSHHHMRRPLPGPGGCIAH). Residues 83–236 (HGSLRQELAA…EKLQAQLMNN (154 aa)) adopt a coiled-coil conformation. Positions 303 to 359 (TQPGYFPQRPGYNFPRGPPGSYDPTTRLPTGPYGAPFPPGPSNNTPYAGTHGNPSRR) are disordered.

It belongs to the FLX family. In terms of assembly, interacts with FRI.

Has no transcriptional activation activity. The protein is Protein FLX-like 2 (FLXL2) of Arabidopsis thaliana (Mouse-ear cress).